A 517-amino-acid chain; its full sequence is ATP synthase subunit alpha (517 aa).

Residue 174-181 (GDRQTGKT) coordinates ATP.

Belongs to the ATPase alpha/beta chains family. In terms of assembly, F-type ATPases have 2 components, CF(1) - the catalytic core - and CF(0) - the membrane proton channel. CF(1) has five subunits: alpha(3), beta(3), gamma(1), delta(1), epsilon(1). CF(0) has three main subunits: a(1), b(2) and c(9-12). The alpha and beta chains form an alternating ring which encloses part of the gamma chain. CF(1) is attached to CF(0) by a central stalk formed by the gamma and epsilon chains, while a peripheral stalk is formed by the delta and b chains.

It is found in the cell inner membrane. It catalyses the reaction ATP + H2O + 4 H(+)(in) = ADP + phosphate + 5 H(+)(out). In terms of biological role, produces ATP from ADP in the presence of a proton gradient across the membrane. The alpha chain is a regulatory subunit. The protein is ATP synthase subunit alpha of Delftia acidovorans (strain DSM 14801 / SPH-1).